We begin with the raw amino-acid sequence, 702 residues long: MADS-box MEF2 type transcription factor MIG1 (702 aa).

The MADS-box domain maps to 1-61 (MGRRKIEIKA…KKLYEYSSGD (61 aa)). Disordered stretches follow at residues 73-608 (GGAT…NIDT) and 658-702 (PSFL…KVDS). The span at 86 to 96 (GGDDDDEEEGD) shows a compositional bias: acidic residues. Residues 132-144 (ASPPIPNGVPFPP) show a composition bias toward pro residues. A compositionally biased stretch (low complexity) spans 145–155 (HGHGVPRGHTP). Polar residues predominate over residues 180-195 (GSPQVNGFGFGQQQSM). Over residues 201 to 241 (TTMPPHMPPQMAPGPPFPYPQHPQHPPHPPHPPHPPHPQQP) the composition is skewed to pro residues. Low complexity-rich tracts occupy residues 273 to 284 (PMGMQRHSVSPP), 326 to 343 (ESPQ…QQPE), and 350 to 371 (EQQQ…QSEP). Residues 456 to 465 (VDESTSNASE) show a composition bias toward polar residues. 2 stretches are compositionally biased toward low complexity: residues 487-512 (RASI…SLRA) and 530-553 (DGSG…DATS). Residues 554 to 567 (QSTRQNDSHSSTNM) show a composition bias toward polar residues. Residues 587–600 (PPNPFAPKRPPQHP) are compositionally biased toward pro residues. Residues 693–702 (NEPKRVKVDS) show a composition bias toward basic and acidic residues.

This sequence belongs to the MEF2 family. In terms of assembly, interacts with MAPK MPS1.

The protein resides in the nucleus. Transcription factor acting downstream of the MPS1 MAP kinase (MAPK) cascade during conidiation and plant infection. Required for overcoming plant defense responses and the differentiation of secondary infectious hyphae in live plant cells. This is MADS-box MEF2 type transcription factor MIG1 from Pyricularia oryzae (strain 70-15 / ATCC MYA-4617 / FGSC 8958) (Rice blast fungus).